The primary structure comprises 262 residues: Acyl-[acyl-carrier-protein]--UDP-N-acetylglucosamine O-acyltransferase (262 aa).

It belongs to the transferase hexapeptide repeat family. LpxA subfamily. In terms of assembly, homotrimer.

The protein localises to the cytoplasm. The catalysed reaction is a (3R)-hydroxyacyl-[ACP] + UDP-N-acetyl-alpha-D-glucosamine = a UDP-3-O-[(3R)-3-hydroxyacyl]-N-acetyl-alpha-D-glucosamine + holo-[ACP]. It participates in glycolipid biosynthesis; lipid IV(A) biosynthesis; lipid IV(A) from (3R)-3-hydroxytetradecanoyl-[acyl-carrier-protein] and UDP-N-acetyl-alpha-D-glucosamine: step 1/6. Involved in the biosynthesis of lipid A, a phosphorylated glycolipid that anchors the lipopolysaccharide to the outer membrane of the cell. In Blochmanniella floridana, this protein is Acyl-[acyl-carrier-protein]--UDP-N-acetylglucosamine O-acyltransferase.